A 364-amino-acid chain; its full sequence is Histidinol-phosphate aminotransferase (364 aa).

K226 is subject to N6-(pyridoxal phosphate)lysine.

The protein belongs to the class-II pyridoxal-phosphate-dependent aminotransferase family. Histidinol-phosphate aminotransferase subfamily. Homodimer. Pyridoxal 5'-phosphate is required as a cofactor.

The catalysed reaction is L-histidinol phosphate + 2-oxoglutarate = 3-(imidazol-4-yl)-2-oxopropyl phosphate + L-glutamate. It participates in amino-acid biosynthesis; L-histidine biosynthesis; L-histidine from 5-phospho-alpha-D-ribose 1-diphosphate: step 7/9. The sequence is that of Histidinol-phosphate aminotransferase from Campylobacter jejuni subsp. jejuni serotype O:23/36 (strain 81-176).